Consider the following 194-residue polypeptide: dTTP/UTP pyrophosphatase (194 aa).

The Proton acceptor role is filled by D66.

This sequence belongs to the Maf family. YhdE subfamily. The cofactor is a divalent metal cation.

Its subcellular location is the cytoplasm. The catalysed reaction is dTTP + H2O = dTMP + diphosphate + H(+). The enzyme catalyses UTP + H2O = UMP + diphosphate + H(+). In terms of biological role, nucleoside triphosphate pyrophosphatase that hydrolyzes dTTP and UTP. May have a dual role in cell division arrest and in preventing the incorporation of modified nucleotides into cellular nucleic acids. The polypeptide is dTTP/UTP pyrophosphatase (Anaeromyxobacter dehalogenans (strain 2CP-C)).